Here is an 873-residue protein sequence, read N- to C-terminus: Serine/threonine-protein phosphatase 6 regulatory subunit 3 (873 aa).

Disordered regions lie at residues 628 to 659, 693 to 715, 729 to 755, 767 to 787, and 840 to 873; these read IAFT…GTKQ, AHGT…MPAK, LSST…PLSA, PGSV…NADK, and AEEA…NGPV. Over residues 644–655 the composition is skewed to acidic residues; sequence DSEESTDSEEED. The span at 729-739 shows a compositional bias: low complexity; the sequence is LSSTDSLRSNS.

This sequence belongs to the SAPS family. As to quaternary structure, protein phosphatase 6 (PP6) holoenzyme is proposed to be a heterotrimeric complex formed by the catalytic subunit, a SAPS domain-containing subunit (PP6R) and an ankyrin repeat-domain containing regulatory subunit (ARS).

Its function is as follows. Regulatory subunit of protein phosphatase 6 (PP6). May function as a scaffolding PP6 subunit. The polypeptide is Serine/threonine-protein phosphatase 6 regulatory subunit 3 (PPP6R3) (Gallus gallus (Chicken)).